The primary structure comprises 406 residues: MARALIIVLDSVGVGGAPDADRYGDTGSDTLGHIAERCAEGRGDRAGLRAGPLRLPHLAELGLGLAAAGASGRIPPNLTPVGPPRGVYGHAVETAAGKDTPSGHWEIAGLPLPEPWGHFPDTRPAFPPELTRALVAEGDLPGILGDCHAPGVAIIDALGAEHLRTGRPICYTSADSVFQIAAHEEAFGLERLYDLCRVARRLCDRYRVCRVIARPFVGSPEAGFRRTGNRRDLAVAPPGRTLLDRAEAAGRAVVSVGKIGDIFAHRATGREIKPGPNAACLTAGLDALATLPQGGLIFVNLVDFDTEHGHRRDVPGYAAELEAFDARIPEILAALAPGDLAVITADHGNDPTWTGTDHTREQVPVLAFGPGVAARPIGRRETFADIGATVAAHLGLAWDGAGTPFL.

Residues D10, D305, H310, D346, H347, and H358 each contribute to the Mn(2+) site.

This sequence belongs to the phosphopentomutase family. The cofactor is Mn(2+).

The protein resides in the cytoplasm. The enzyme catalyses 2-deoxy-alpha-D-ribose 1-phosphate = 2-deoxy-D-ribose 5-phosphate. It carries out the reaction alpha-D-ribose 1-phosphate = D-ribose 5-phosphate. It participates in carbohydrate degradation; 2-deoxy-D-ribose 1-phosphate degradation; D-glyceraldehyde 3-phosphate and acetaldehyde from 2-deoxy-alpha-D-ribose 1-phosphate: step 1/2. Functionally, isomerase that catalyzes the conversion of deoxy-ribose 1-phosphate (dRib-1-P) and ribose 1-phosphate (Rib-1-P) to deoxy-ribose 5-phosphate (dRib-5-P) and ribose 5-phosphate (Rib-5-P), respectively. In Methylobacterium radiotolerans (strain ATCC 27329 / DSM 1819 / JCM 2831 / NBRC 15690 / NCIMB 10815 / 0-1), this protein is Phosphopentomutase.